Here is a 237-residue protein sequence, read N- to C-terminus: Derlin-2 (237 aa).

The Cytoplasmic portion of the chain corresponds to 1-20 (MNGVVAALEEMPPVTRFYTG). A helical transmembrane segment spans residues 21–41 (ACVLLTTAVHLEFVTPFHLYF). Residues 42–54 (NWELIIRKYQFWR) lie on the Lumenal side of the membrane. A helical membrane pass occupies residues 55-75 (LITSFCFFGSFGFSFLFNMIF). Residues 76 to 97 (TYRYCMMLEEGSFRGRRADFVY) lie on the Cytoplasmic side of the membrane. Residues 98–118 (MFLFGAVLMILSGIFVQILFL) traverse the membrane as a helical segment. Residues 119-166 (GQAFTIMLVYIWSRRNPMIQMNFFGVLTFTAPYLPWVLLLFSLLLGNN) are Lumenal-facing. A helical transmembrane segment spans residues 167–187 (AVVDFMGIACGHIYFFLEDVF). At 188-237 (PFQEHGKRFLKTPQWLVYLFDERRPEPLPEDERPGGFEWGDEQPEQEQHD) the chain is on the cytoplasmic side. Residues 212-222 (PEPLPEDERPG) are compositionally biased toward basic and acidic residues. The segment at 212-237 (PEPLPEDERPGGFEWGDEQPEQEQHD) is disordered. A compositionally biased stretch (acidic residues) spans 226–237 (WGDEQPEQEQHD).

It belongs to the derlin family.

The protein localises to the endoplasmic reticulum membrane. In terms of biological role, may be required for the degradation process of some specific misfolded endoplasmic reticulum (ER) luminal proteins. Participates in the transfer of misfolded proteins from the ER to the cytosol, where they are destroyed by the proteasome in a ubiquitin-dependent manner. Its precise function remains unclear, but its ability to complement der1 mutations in C.cerevisiae, suggests a similar function in the degradation of ER misfolded proteins. This Caenorhabditis elegans protein is Derlin-2.